The sequence spans 156 residues: Hydrogenase 3 maturation protease (156 aa).

Ni(2+) is bound by residues Asp-16, Asp-62, and His-90.

It belongs to the peptidase A31 family. In terms of assembly, monomer.

It catalyses the reaction This enzyme specifically removes a 32-amino acid peptide from the C-terminus of the precursor of the large subunit of E.coli hydrogenase 3 by cleavage at the C-terminal side of Arg-537.. Functionally, protease involved in the C-terminal processing of HycE, the large subunit of hydrogenase 3. This Escherichia coli O157:H7 protein is Hydrogenase 3 maturation protease (hycI).